We begin with the raw amino-acid sequence, 264 residues long: Thymidylate synthase (264 aa).

Residue arginine 21 coordinates dUMP. Histidine 51 serves as a coordination point for (6R)-5,10-methylene-5,6,7,8-tetrahydrofolate. 126–127 (RR) is a dUMP binding site. Cysteine 146 acts as the Nucleophile in catalysis. DUMP is bound by residues 166 to 169 (RSCD), asparagine 177, and 207 to 209 (HLY). Residue aspartate 169 participates in (6R)-5,10-methylene-5,6,7,8-tetrahydrofolate binding. Alanine 263 lines the (6R)-5,10-methylene-5,6,7,8-tetrahydrofolate pocket.

This sequence belongs to the thymidylate synthase family. Bacterial-type ThyA subfamily. As to quaternary structure, homodimer.

It localises to the cytoplasm. It carries out the reaction dUMP + (6R)-5,10-methylene-5,6,7,8-tetrahydrofolate = 7,8-dihydrofolate + dTMP. Its pathway is pyrimidine metabolism; dTTP biosynthesis. In terms of biological role, catalyzes the reductive methylation of 2'-deoxyuridine-5'-monophosphate (dUMP) to 2'-deoxythymidine-5'-monophosphate (dTMP) while utilizing 5,10-methylenetetrahydrofolate (mTHF) as the methyl donor and reductant in the reaction, yielding dihydrofolate (DHF) as a by-product. This enzymatic reaction provides an intracellular de novo source of dTMP, an essential precursor for DNA biosynthesis. The chain is Thymidylate synthase from Aeromonas salmonicida (strain A449).